A 149-amino-acid chain; its full sequence is Cell division protein SepF (149 aa).

The protein belongs to the SepF family. Homodimer. Interacts with FtsZ.

It is found in the cytoplasm. Cell division protein that is part of the divisome complex and is recruited early to the Z-ring. Probably stimulates Z-ring formation, perhaps through the cross-linking of FtsZ protofilaments. Its function overlaps with FtsA. This Pelotomaculum thermopropionicum (strain DSM 13744 / JCM 10971 / SI) protein is Cell division protein SepF.